We begin with the raw amino-acid sequence, 211 residues long: uncharacterized protein (211 aa).

Disordered regions lie at residues 45–74 and 147–211; these read RSCG…GALS and AETR…WEEP. The span at 48 to 71 shows a compositional bias: low complexity; that stretch reads GRSSTGGCSPCSGPGPSSPRTSRG. Polar residues predominate over residues 195-205; that stretch reads DSGSIKMSENE.

This is an uncharacterized protein from Homo sapiens (Human).